A 359-amino-acid chain; its full sequence is 2-epi-5-epi-valiolone 7-kinase (359 aa).

Residues 28-48 (GGLGEVHTTPSPGHARRPGAG) are disordered.

The protein belongs to the ROK (NagC/XylR) family.

The enzyme catalyses 2-epi-5-epi-valiolone + ATP = 2-epi-5-epi-valiolone 7-phosphate + ADP + H(+). In terms of biological role, catalyzes the conversion of 2-epi-5-epi-valiolone to 2-epi-5-epi-valiolone 7-phosphate. Involved in the biosynthesis of the acarviose moiety of the alpha-glucosidase inhibitor acarbose. This is 2-epi-5-epi-valiolone 7-kinase from Actinoplanes sp. (strain ATCC 31044 / CBS 674.73 / SE50/110).